The sequence spans 453 residues: Glutamyl-tRNA(Gln) amidotransferase subunit A (453 aa).

Active-site charge relay system residues include lysine 53 and serine 128. Catalysis depends on serine 152, which acts as the Acyl-ester intermediate.

The protein belongs to the amidase family. GatA subfamily. Heterotrimer of A, B and C subunits.

The enzyme catalyses L-glutamyl-tRNA(Gln) + L-glutamine + ATP + H2O = L-glutaminyl-tRNA(Gln) + L-glutamate + ADP + phosphate + H(+). In terms of biological role, allows the formation of correctly charged Gln-tRNA(Gln) through the transamidation of misacylated Glu-tRNA(Gln) in organisms which lack glutaminyl-tRNA synthetase. The reaction takes place in the presence of glutamine and ATP through an activated gamma-phospho-Glu-tRNA(Gln). The chain is Glutamyl-tRNA(Gln) amidotransferase subunit A from Helicobacter pylori (strain G27).